Consider the following 439-residue polypeptide: 5-hydroxybenzimidazole synthase (439 aa).

Substrate is bound by residues Met96, Tyr125, His164, Ser187–Gly189, Asn228–Arg231, and Glu267. His271 is a Zn(2+) binding site. Tyr294 is a substrate binding site. Position 335 (His335) interacts with Zn(2+). Positions 410, 413, and 417 each coordinate [4Fe-4S] cluster.

Belongs to the ThiC family. 5-hydroxybenzimidazole synthase subfamily. As to quaternary structure, homodimer. [4Fe-4S] cluster serves as cofactor.

It catalyses the reaction 5-amino-1-(5-phospho-beta-D-ribosyl)imidazole + AH2 + S-adenosyl-L-methionine = 5-hydroxybenzimidazole + 5'-deoxyadenosine + formate + L-methionine + A + NH4(+) + phosphate + 2 H(+). Functionally, catalyzes the conversion of aminoimidazole ribotide (AIR) to 5-hydroxybenzimidazole (5-HBI) in a radical S-adenosyl-L-methionine (SAM)-dependent reaction. Is thus involved in the anaerobic biosynthesis of the benzimidazole lower axial ligand of the cobamide produced by D.autotrophicum. The polypeptide is 5-hydroxybenzimidazole synthase (Desulforapulum autotrophicum (strain ATCC 43914 / DSM 3382 / VKM B-1955 / HRM2) (Desulfobacterium autotrophicum)).